A 166-amino-acid polypeptide reads, in one-letter code: uncharacterized protein (166 aa).

4Fe-4S ferredoxin-type domains are found at residues 44-73 (ARED…LKQQ), 75-104 (ATLE…PNFP), and 139-166 (STLE…ITLK). 8 residues coordinate [4Fe-4S] cluster: cysteine 53, cysteine 56, cysteine 59, cysteine 63, cysteine 84, cysteine 87, cysteine 90, and cysteine 94.

This is an uncharacterized protein from Haemophilus influenzae (strain ATCC 51907 / DSM 11121 / KW20 / Rd).